Consider the following 622-residue polypeptide: 4-hydroxyphenylalkanoate adenylyltransferase (622 aa).

This sequence belongs to the ATP-dependent AMP-binding enzyme family.

It catalyses the reaction 17-(4-hydroxyphenyl)heptadecanoate + holo-[(phenol)carboxyphthiodiolenone synthase] + ATP = 17-(4-hydroxyphenyl)heptadecanoyl-[(phenol)carboxyphthiodiolenone synthase] + AMP + diphosphate. The enzyme catalyses 19-(4-hydroxyphenyl)nonadecanoate + holo-[(phenol)carboxyphthiodiolenone synthase] + ATP = 19-(4-hydroxyphenyl)nonadecanoyl-[(phenol)carboxyphthiodiolenone synthase] + AMP + diphosphate. It participates in lipid metabolism; fatty acid biosynthesis. Its function is as follows. Catalyzes the activation of long-chain fatty acids as acyl-adenylates (acyl-AMP), which are then transferred to the multifunctional polyketide synthase PpsA for further chain extension. Involved in the biosynthesis of phenolphthiocerol, which is an important intermediate in the biosynthesis of phenolic glycolipid (PGL), also called mycosid B. In Mycobacterium marinum (strain ATCC BAA-535 / M), this protein is 4-hydroxyphenylalkanoate adenylyltransferase (fadD29).